A 1983-amino-acid polypeptide reads, in one-letter code: Nonribosomal peptide synthetase verP (1983 aa).

Positions 11 to 405 are adenylation 1; that stretch reads FAQAASRCPD…FRGRKDRTVK (395 aa). Residues 526 to 602 form the Carrier 1 domain; sequence DRHLDTLLTV…DVAPLITSRA (77 aa). Residue S563 is modified to O-(pantetheine 4'-phosphoryl)serine. The interval 769-1047 is condensation 1; the sequence is ETDELTVVLT…GQHFKHALYS (279 aa). The tract at residues 1089-1469 is adenylation 2; that stretch reads QVMGQFPSLI…GRIDRLVKLR (381 aa). The Carrier 2 domain maps to 1584–1662; it reads ITRPKIEDKL…DQINMVRALL (79 aa). Position 1622 is an O-(pantetheine 4'-phosphoryl)serine (S1622). The interval 1652–1976 is condensation 2; that stretch reads KDQINMVRAL…GGLEHPLFEC (325 aa).

Belongs to the NRP synthetase family.

Its pathway is mycotoxin biosynthesis. Functionally, nonribosomal peptide synthetase; part of the gene cluster that mediates the biosynthesis of 11'-deoxyverticillin A, one of the dimeric epipolythiodioxopiperazines (ETPs) from the verticillin family that act as mycotoxins. 11'-deoxyverticillin A is required for normal conidiation. The nonribosomal peptide synthetase verP is speculated to be responsible for condensation of amino acids to form the carbon skeleton of verticillin, whereas the cluster-specific tailoring enzymes are involved in further modifications leading to the production of 11'-deoxyverticillin A. The polypeptide is Nonribosomal peptide synthetase verP (Clonostachys rogersoniana).